Here is a 730-residue protein sequence, read N- to C-terminus: Synaptotagmin-like protein 5 (730 aa).

One can recognise a RabBD domain in the interval 7 to 123 (FINLSFLLDH…IITGEWFFEE (117 aa)). The FYVE-type zinc finger occupies 64 to 106 (CVHCHRNLGLIFDRGDPCQACSLRVCRECRVAGPNGSWKCTVC). S147 is subject to Phosphoserine. Disordered regions lie at residues 147-188 (SPGA…GFLL), 217-271 (QHFR…TRTV), and 294-355 (SQEL…LDKD). Composition is skewed to polar residues over residues 248 to 271 (PKSS…TRTV) and 305 to 322 (TSGT…SSDQ). C2 domains follow at residues 406–527 (VSGE…DEWF) and 563–694 (PPEQ…VDWM).

As to quaternary structure, binds RAB27A that has been activated by GTP-binding, and possibly also RAB3A and RAB6A. In terms of tissue distribution, highly expressed in placenta and liver.

The protein localises to the membrane. Its function is as follows. May act as Rab effector protein and play a role in vesicle trafficking. Binds phospholipids. The chain is Synaptotagmin-like protein 5 (SYTL5) from Homo sapiens (Human).